The chain runs to 144 residues: Transcription antitermination protein NusB (144 aa).

Belongs to the NusB family.

Involved in transcription antitermination. Required for transcription of ribosomal RNA (rRNA) genes. Binds specifically to the boxA antiterminator sequence of the ribosomal RNA (rrn) operons. The sequence is that of Transcription antitermination protein NusB from Dictyoglomus turgidum (strain DSM 6724 / Z-1310).